A 298-amino-acid chain; its full sequence is Protein transport protein SEC13-1 (298 aa).

WD repeat units lie at residues Ala-7–Val-46, Gly-51–Ile-92, Val-97–Pro-138, Ala-143–Leu-196, Gly-203–Val-245, and Glu-253–Ser-292.

The protein belongs to the WD repeat SEC13 family. The COPII coat is composed of at least 5 proteins: the SEC23/24 complex, the SEC13/31 complex, and the protein SAR1. Component of the nuclear pore complex (NPC). NPC constitutes the exclusive means of nucleocytoplasmic transport. NPCs allow the passive diffusion of ions and small molecules and the active, nuclear transport receptor-mediated bidirectional transport of macromolecules such as proteins, RNAs, ribonucleoparticles (RNPs), and ribosomal subunits across the nuclear envelope. Due to its 8-fold rotational symmetry, all subunits are present with 8 copies or multiples thereof.

It is found in the cytoplasmic vesicle. It localises to the COPII-coated vesicle membrane. Its subcellular location is the endoplasmic reticulum membrane. The protein localises to the nucleus. The protein resides in the nuclear pore complex. Its function is as follows. Component of the coat protein complex II (COPII) which promotes the formation of transport vesicles from the endoplasmic reticulum (ER). The coat has two main functions, the physical deformation of the endoplasmic reticulum membrane into vesicles and the selection of cargo molecules. It also functions as a component of the nuclear pore complex (NPC). NPC components, collectively referred to as nucleoporins (NUPs), can play the role of both NPC structural components and of docking or interaction partners for transiently associated nuclear transport factors. SEC13 is required for efficient mRNA export from the nucleus to the cytoplasm and for correct nuclear pore biogenesis and distribution. This chain is Protein transport protein SEC13-1 (SEC131), found in Candida glabrata (strain ATCC 2001 / BCRC 20586 / JCM 3761 / NBRC 0622 / NRRL Y-65 / CBS 138) (Yeast).